A 590-amino-acid chain; its full sequence is V-type ATP synthase alpha chain (590 aa).

232-239 (GPFGSGKT) contacts ATP.

It belongs to the ATPase alpha/beta chains family.

It catalyses the reaction ATP + H2O + 4 H(+)(in) = ADP + phosphate + 5 H(+)(out). Functionally, produces ATP from ADP in the presence of a proton gradient across the membrane. The V-type alpha chain is a catalytic subunit. This Thermoanaerobacter sp. (strain X514) protein is V-type ATP synthase alpha chain.